The chain runs to 215 residues: Probable transaldolase 1 (215 aa).

Catalysis depends on Lys-83, which acts as the Schiff-base intermediate with substrate.

The protein belongs to the transaldolase family. Type 3B subfamily.

It is found in the cytoplasm. The catalysed reaction is D-sedoheptulose 7-phosphate + D-glyceraldehyde 3-phosphate = D-erythrose 4-phosphate + beta-D-fructose 6-phosphate. It participates in carbohydrate degradation; pentose phosphate pathway; D-glyceraldehyde 3-phosphate and beta-D-fructose 6-phosphate from D-ribose 5-phosphate and D-xylulose 5-phosphate (non-oxidative stage): step 2/3. Transaldolase is important for the balance of metabolites in the pentose-phosphate pathway. This is Probable transaldolase 1 from Bacillus cereus (strain ATCC 14579 / DSM 31 / CCUG 7414 / JCM 2152 / NBRC 15305 / NCIMB 9373 / NCTC 2599 / NRRL B-3711).